A 532-amino-acid polypeptide reads, in one-letter code: MKRKDIVKLSRRDFERAWLESGKSLRKPHHDMQYPRLRFETGKSHVLYDTIWMIREAYLRLGFSEMVNPLLIDEEHIYRQFGPEAPAVLDRCFYLGGLPRPDIGLGTGRIQMIEDMGIDVSDEKLENLKEVFRSYKKGDLSGDDLVLEVSNALEVESHDGLRVLERVFPEIRDLKPVSGRTTLRSHMTSGWFISLQNIHDRYRMPLKLFSIDRCFRREQKEDSSHLMTYHSASCVVVDHEVPLDVGKAVAEGLLEHLGFSRFRFRPDEKKSKYYIPGTQTEVYAYHPLLKEWVEVATFGLYSPIALSMYGIDQEVMNLGVGVERVAMILNQASDVREMVYPQIYGEWRLSDRDIAEMLRINLHPVTSDGRMLMEKIVKTWRAHADAPSPCSFEVYSGEFLGRRIEVSALEVEENTRLLGPAVWNTVYIHDGNILGVPPGTELDSELITRARKEGLNTGITYMEALAAEAAYRIEEMVVSGAEEVEVRSTIARSLSDLNLTLEDTAMRYITGKNREIDLRGPLFSTIRCRLRG.

Substrate is bound by residues 186-188, 231-233, 273-274, and N317; these read HMT, SAS, and YY.

The protein belongs to the class-II aminoacyl-tRNA synthetase family. O-phosphoseryl-tRNA(Cys) synthetase subfamily. Homotetramer. Interacts with SepCysS.

The enzyme catalyses tRNA(Cys) + O-phospho-L-serine + ATP = O-phospho-L-seryl-tRNA(Cys) + AMP + diphosphate. Its function is as follows. Catalyzes the attachment of O-phosphoserine (Sep) to tRNA(Cys). The polypeptide is O-phosphoserine--tRNA(Cys) ligase (Methanothermobacter thermautotrophicus (strain ATCC 29096 / DSM 1053 / JCM 10044 / NBRC 100330 / Delta H) (Methanobacterium thermoautotrophicum)).